The chain runs to 303 residues: 4-diphosphocytidyl-2-C-methyl-D-erythritol kinase (303 aa).

Lysine 24 is a catalytic residue. Residue 111-121 (PIASGIGGGSA) participates in ATP binding. Residue aspartate 153 is part of the active site.

This sequence belongs to the GHMP kinase family. IspE subfamily.

It catalyses the reaction 4-CDP-2-C-methyl-D-erythritol + ATP = 4-CDP-2-C-methyl-D-erythritol 2-phosphate + ADP + H(+). Its pathway is isoprenoid biosynthesis; isopentenyl diphosphate biosynthesis via DXP pathway; isopentenyl diphosphate from 1-deoxy-D-xylulose 5-phosphate: step 3/6. In terms of biological role, catalyzes the phosphorylation of the position 2 hydroxy group of 4-diphosphocytidyl-2C-methyl-D-erythritol. The polypeptide is 4-diphosphocytidyl-2-C-methyl-D-erythritol kinase (Rhizobium johnstonii (strain DSM 114642 / LMG 32736 / 3841) (Rhizobium leguminosarum bv. viciae)).